A 448-amino-acid chain; its full sequence is MAKHRYLPMTEQDEKEMLEVIGVKSIDDLFQDIPEKIRFKRDYDLKPAKSEPALLRELSKLASKNANTSEYASFLGAGVYSHYIPTVVDHVISRSEFYTAYTPYQPEISQGELQAIFEFQTMIAELTGMDLANSSMYDGGTALAEAAMLASGHTKRKKILISGAVHPESINVLKTYATGQHIEVEVIPEVDGKTDIDVLKKALSDDIAGFVVQYPNFYGQVEPLAELEKLVHENNSLLLVSSNPLSLGLLTPPGEFGADIVVGDSQVFGIPESFGGPHCGFFAVTNKLMRKVPGRLVGETVDENGKRGYVLTLQAREQHIRRDKATSNICSNQALNALASSVAMATLGKTGLVEMAKQNLDKSHYAKQKFRENGFEVLFSDGFFNEFVVKLSKPIKEVNESLLDEGIIGGYDLGFYDAKYEQHMLVAVTEMRTKEEIDAFVASLEGVK.

The protein belongs to the GcvP family. N-terminal subunit subfamily. In terms of assembly, the glycine cleavage system is composed of four proteins: P, T, L and H. In this organism, the P 'protein' is a heterodimer of two subunits.

It catalyses the reaction N(6)-[(R)-lipoyl]-L-lysyl-[glycine-cleavage complex H protein] + glycine + H(+) = N(6)-[(R)-S(8)-aminomethyldihydrolipoyl]-L-lysyl-[glycine-cleavage complex H protein] + CO2. In terms of biological role, the glycine cleavage system catalyzes the degradation of glycine. The P protein binds the alpha-amino group of glycine through its pyridoxal phosphate cofactor; CO(2) is released and the remaining methylamine moiety is then transferred to the lipoamide cofactor of the H protein. The sequence is that of Probable glycine dehydrogenase (decarboxylating) subunit 1 from Listeria innocua serovar 6a (strain ATCC BAA-680 / CLIP 11262).